The following is a 178-amino-acid chain: Large ribosomal subunit protein uL6 (178 aa).

This sequence belongs to the universal ribosomal protein uL6 family. Part of the 50S ribosomal subunit.

Its function is as follows. This protein binds to the 23S rRNA, and is important in its secondary structure. It is located near the subunit interface in the base of the L7/L12 stalk, and near the tRNA binding site of the peptidyltransferase center. The protein is Large ribosomal subunit protein uL6 of Campylobacter jejuni subsp. jejuni serotype O:2 (strain ATCC 700819 / NCTC 11168).